We begin with the raw amino-acid sequence, 215 residues long: Biogenesis of lysosome-related organelles complex 1 subunit 4 (215 aa).

The disordered stretch occupies residues 1–57; sequence MEEGPAVGTLSREVSTEEAEPLGAAWSGDSGHVSQSHSSASGPWDDDGPEDAPGRDL. Low complexity predominate over residues 27–42; it reads SGDSGHVSQSHSSASG. Coiled coils occupy residues 80-97 and 134-165; these read EVEA…KVDE and IDKL…LGTF. The residue at position 164 (threonine 164) is a Phosphothreonine.

This sequence belongs to the BLOC1S4 family. In terms of assembly, octamer composed of one copy each BLOC1S1, BLOC1S2, BLOC1S3, BLOC1S4, BLOC1S5, BLOC1S6, DTNBP1/BLOC1S7 and SNAPIN/BLOC1S8. Component of the biogenesis of lysosome-related organelles complex 1 (BLOC-1) composed of BLOC1S1, BLOC1S2, BLOC1S3, BLOC1S4, BLOC1S5, BLOC1S6, DTNBP1/BLOC1S7 and SNAPIN/BLOC1S8. The BLOC-1 complex associates with the AP-3 protein complex and membrane protein cargos. Interacts with BLOC1S5 and BLOC1S6. As to expression, widely expressed.

It localises to the cytoplasm. Functionally, component of the BLOC-1 complex, a complex that is required for normal biogenesis of lysosome-related organelles (LRO), such as platelet dense granules and melanosomes. In concert with the AP-3 complex, the BLOC-1 complex is required to target membrane protein cargos into vesicles assembled at cell bodies for delivery into neurites and nerve terminals. The BLOC-1 complex, in association with SNARE proteins, is also proposed to be involved in neurite extension. Plays a role in intracellular vesicle trafficking. The sequence is that of Biogenesis of lysosome-related organelles complex 1 subunit 4 (Bloc1s4) from Mus musculus (Mouse).